The following is a 313-amino-acid chain: Ribonuclease HIII (313 aa).

Residues 62–88 form a disordered region; sequence AERWTADAETPAPKKPASKKSIPSVYQ. Positions 96–312 constitute an RNase H type-2 domain; that stretch reads MSVIGSDEVG…TQKAKRIASK (217 aa). A divalent metal cation is bound by residues Asp102, Glu103, and Asp207.

This sequence belongs to the RNase HII family. RnhC subfamily. Requires Mn(2+) as cofactor. Mg(2+) serves as cofactor.

It localises to the cytoplasm. It catalyses the reaction Endonucleolytic cleavage to 5'-phosphomonoester.. Functionally, endonuclease that specifically degrades the RNA of RNA-DNA hybrids. This Bacillus licheniformis (strain ATCC 14580 / DSM 13 / JCM 2505 / CCUG 7422 / NBRC 12200 / NCIMB 9375 / NCTC 10341 / NRRL NRS-1264 / Gibson 46) protein is Ribonuclease HIII.